We begin with the raw amino-acid sequence, 893 residues long: Probable ion channel CASTOR (893 aa).

Residues 1-94 (MPLDPDSSPA…APRRRDPRYA (94 aa)) are disordered. Pro residues predominate over residues 65–85 (PLPPPEQQKQQQPPPTTPPPA). A helical membrane pass occupies residues 132 to 152 (TLRWSGMVSVAAIVLCFSSLV). The stretch at 156 to 178 (SSLHDQVHHLKAQLAEATTKLQS) forms a coiled coil. 3 consecutive transmembrane segments (helical) span residues 210-230 (LLLS…MDLF), 266-286 (LVLL…LYGV), and 318-338 (LVSV…LGLV). RCK N-terminal domains lie at 359–500 (QSHT…ETVV) and 619–792 (PERI…DYVL). The stretch at 389–415 (TIVVMAEKDKEEMEADIAKMEFDLKGT) forms a coiled coil.

This sequence belongs to the castor/pollux (TC 1.A.1.23) family. As to expression, expressed in roots, leaves, stems and panicles.

Its subcellular location is the nucleus membrane. Its function is as follows. Required for mycorrhizal symbiosis. This is Probable ion channel CASTOR from Oryza sativa subsp. japonica (Rice).